The primary structure comprises 268 residues: 14-3-3-like protein GF14 upsilon (268 aa).

A phosphoserine mark is found at serine 69 and serine 192. A Phosphothreonine modification is found at threonine 213. A disordered region spans residues 243-268; sequence EAGDDIKEAPKEVQKVDEQAQPPPSQ. Positions 246 to 260 are enriched in basic and acidic residues; it reads DDIKEAPKEVQKVDE. Residue serine 267 is modified to Phosphoserine.

This sequence belongs to the 14-3-3 family. Interacts with EDE1. Interacts with DREB1A and DREB1B in the nucleus. Interacts with CINV1.

It is found in the cytoplasm. The protein localises to the nucleus. Functionally, is associated with a DNA binding complex that binds to the G box, a well-characterized cis-acting DNA regulatory element found in plant genes. May be involved in cell cycle regulation by binding to soluble EDE1 and sequestering it in an inactive form during the early stages of mitosis. This Arabidopsis thaliana (Mouse-ear cress) protein is 14-3-3-like protein GF14 upsilon (GRF5).